A 499-amino-acid polypeptide reads, in one-letter code: Putative ribose/galactose/methyl galactoside import ATP-binding protein 3 (499 aa).

ABC transporter domains lie at 8–243 (LRMR…VGRE) and 253–497 (SKIG…TGEE). Residue 40–47 (GENGAGKS) participates in ATP binding.

It belongs to the ABC transporter superfamily. Carbohydrate importer 2 (CUT2) (TC 3.A.1.2) family.

Its subcellular location is the cell inner membrane. It carries out the reaction D-ribose(out) + ATP + H2O = D-ribose(in) + ADP + phosphate + H(+). The enzyme catalyses D-galactose(out) + ATP + H2O = D-galactose(in) + ADP + phosphate + H(+). Functionally, part of an ABC transporter complex involved in carbohydrate import. Could be involved in ribose, galactose and/or methyl galactoside import. Responsible for energy coupling to the transport system. This chain is Putative ribose/galactose/methyl galactoside import ATP-binding protein 3, found in Agrobacterium fabrum (strain C58 / ATCC 33970) (Agrobacterium tumefaciens (strain C58)).